Reading from the N-terminus, the 789-residue chain is Protein translocase subunit SecA 2 (789 aa).

ATP-binding positions include Q79, 97 to 101 (GEGKT), and D487.

This sequence belongs to the SecA family. Monomer and homodimer. Part of the essential Sec protein translocation apparatus which comprises SecA, SecYEG and auxiliary proteins SecDF. Other proteins may also be involved.

Its subcellular location is the cell membrane. The protein resides in the cytoplasm. The enzyme catalyses ATP + H2O + cellular proteinSide 1 = ADP + phosphate + cellular proteinSide 2.. Functionally, part of the Sec protein translocase complex. Interacts with the SecYEG preprotein conducting channel. Has a central role in coupling the hydrolysis of ATP to the transfer of proteins into and across the cell membrane, serving as an ATP-driven molecular motor driving the stepwise translocation of polypeptide chains across the membrane. The protein is Protein translocase subunit SecA 2 of Pediococcus pentosaceus (strain ATCC 25745 / CCUG 21536 / LMG 10740 / 183-1w).